The chain runs to 302 residues: tRNA pseudouridine synthase B (302 aa).

Substrate is bound at residue His40. Asp45 functions as the Nucleophile in the catalytic mechanism. 3 residues coordinate substrate: Tyr73, Tyr178, and Leu199.

The protein belongs to the pseudouridine synthase TruB family. Type 1 subfamily.

The enzyme catalyses uridine(55) in tRNA = pseudouridine(55) in tRNA. In terms of biological role, responsible for synthesis of pseudouridine from uracil-55 in the psi GC loop of transfer RNAs. The protein is tRNA pseudouridine synthase B of Buchnera aphidicola subsp. Baizongia pistaciae (strain Bp).